The chain runs to 640 residues: DNA topoisomerase 3 (640 aa).

The 155-residue stretch at 21–175 (RVLCVAEKNS…WRAQFSHLEP (155 aa)) folds into the Toprim domain. 3 residues coordinate Mg(2+): Glu-27, Asp-137, and Asp-139. The Topo IA-type catalytic domain occupies 189–618 (DMKLVAAVEC…QLLPLYKEAF (430 aa)). The active-site O-(5'-phospho-DNA)-tyrosine intermediate is Tyr-354.

The protein belongs to the type IA topoisomerase family. Mg(2+) serves as cofactor.

It carries out the reaction ATP-independent breakage of single-stranded DNA, followed by passage and rejoining.. Its function is as follows. Introduces a single-strand break via transesterification at a target site in duplex DNA. Releases the supercoiling and torsional tension of DNA introduced during the DNA replication and transcription by transiently cleaving and rejoining one strand of the DNA duplex. The scissile phosphodiester is attacked by the catalytic tyrosine of the enzyme, resulting in the formation of a DNA-(5'-phosphotyrosyl)-enzyme intermediate and the expulsion of a 3'-OH DNA strand. This chain is DNA topoisomerase 3 (TOP3), found in Candidozyma auris (Yeast).